Consider the following 237-residue polypeptide: Probable septum site-determining protein MinC (237 aa).

The protein belongs to the MinC family. As to quaternary structure, interacts with MinD and FtsZ.

Cell division inhibitor that blocks the formation of polar Z ring septums. Rapidly oscillates between the poles of the cell to destabilize FtsZ filaments that have formed before they mature into polar Z rings. Prevents FtsZ polymerization. In Buchnera aphidicola subsp. Acyrthosiphon pisum (strain 5A), this protein is Probable septum site-determining protein MinC.